The primary structure comprises 873 residues: V-type proton ATPase 116 kDa subunit a 2 (873 aa).

Over 1–407 (MGSLSRSEEM…TIITFPFLFS (407 aa)) the chain is Cytoplasmic. The helical transmembrane segment at 408–428 (CMFGDLGHGCIMLMAGLWFVL) threads the bilayer. At 429–445 (REKNLQARNIKDEIFNM) the chain is on the lumenal side. A helical transmembrane segment spans residues 446-466 (FFGGRYIILLMGLFSIHAGII). The Cytoplasmic portion of the chain corresponds to 467–543 (YNDMFAKSFN…NKLNFLNSMK (77 aa)). Residues 544-564 (MKLSVILGISQMTFGVILSFF) traverse the membrane as a helical segment. N-linked (GlcNAc...) asparagine glycans are attached at residues asparagine 565 and asparagine 569. The Lumenal segment spans residues 565–574 (NHTYNKSKID). Residues 575 to 595 (IFTVFIPQMLFMGCIFMYLCL) traverse the membrane as a helical segment. Over 596-614 (QIILKWLFFWTKEATVFGQ) the chain is Cytoplasmic. The helical transmembrane segment at 615–635 (IYPGSHCAPSLLIGLINMFMM) threads the bilayer. Residues 636-668 (KDRNAGFVVDGGKVNGEYREVETCYLSQWYPGQ) lie on the Lumenal side of the membrane. Residues 669–689 (SVIEMILVVIAVICVPVMLFG) traverse the membrane as a helical segment. At 690 to 785 (KPIHHVMQQK…LWALSLAHAQ (96 aa)) the chain is on the cytoplasmic side. The helical transmembrane segment at 786 to 806 (LSEVLWHMVFVTGGLGISGTA) threads the bilayer. Residue glycine 807 is a topological domain, lumenal. Residues 808–828 (FIAVYVVFFIFFVLTISILVL) form a helical membrane-spanning segment. Residues 829–873 (MEGLSAFLHTLRLHWVEFQSKFYLGLGYPFVPYSFKTALQEAEAA) are Cytoplasmic-facing.

This sequence belongs to the V-ATPase 116 kDa subunit family. V-ATPase is a heteromultimeric enzyme made up of two complexes: the ATP-hydrolytic V1 complex and the proton translocation V0 complex. The V1 complex consists of three catalytic AB heterodimers that form a heterohexamer, three peripheral stalks each consisting of EG heterodimers, one central rotor including subunits D and F, and the regulatory subunits C and H. The proton translocation complex V0 consists of the proton transport subunit a, a ring of proteolipid subunits c9c'', rotary subunit d, subunits e and f, and the accessory subunits vah-19/Ac45 and vah-20/PRR. Interacts with V-type proton ATPase subunit C vha-11. Expressed in the H-shaped excretory cell (at protein level). Expressed in hypodermal cells around the vulva. Expressed in the main epidermal syncytium. Expressed in the sheath cells associated with head and tail sensory organs; specifically, expressed in the apical sheath cells of the amphids and CEP neuron and in the sheath cells of the OLQ sensory organ.

The protein localises to the apical cell membrane. It localises to the endosome. The protein resides in the multivesicular body membrane. Functionally, subunit of the V0 complex of vacuolar(H+)-ATPase (V-ATPase), a multisubunit enzyme composed of a peripheral complex (V1) that hydrolyzes ATP and a membrane integral complex (V0) that translocates protons. V-ATPase is responsible for acidifying and maintaining the pH of intracellular compartments and in some cell types, is targeted to the plasma membrane, where it is responsible for acidifying the extracellular environment. Involved in the assembly of the V-ATPase complex. The V-ATPase is required for the function of the excretory canal. Independently of the V1 complex, the V0 complex of the V-ATPase is required for multivesicular body membrane fusion with the apical membrane of the epidermal cells during exosome release and thus regulates the release of cuticle components such as Hedgehog-related peptide wrt-2 but not collagen. Also, in the epidermis, regulates the trafficking of che-14 and rdy-2. Regulates the secretion of granular material found in the amphid channel and in controlling osmoregulation in the amphid pocket. This Caenorhabditis elegans protein is V-type proton ATPase 116 kDa subunit a 2.